A 389-amino-acid polypeptide reads, in one-letter code: MKTFLTRIVKGVFGTAYKLLSALLPVQHDKVVIASYREDQLSDNFRGVYEKLKQDPSLRITLLFRKMDKGLIGRAAYLLHLFCSLYHLATCRVLLLDDYYFPLYVVPKRKETVAIQLWHACGAFKKFGYSIVNKPFGPSSDYLKIVPVHSNYDYAIVSAPAAVPHFAEAFQMEEKQILPLGIPRTDYFYHKEHIRTVLDEFHQAYPELKHKKKLLYAPTFRGSGHHQEGDATPLDLLQLKSALHHKDYVVMLHLHPYMRKHAHTEEDDFVLDLTDSYSLYDLMAISDGLITDYSSVIFEYSLLKRPMYFYCPDLEDYLKERDFYYPFESFVPGPISKDVPSLVHDIESDHEADTKRIEAFSQTYITHQDGKSSERVADFISSFLTSGAD.

Belongs to the CDP-glycerol glycerophosphotransferase family.

It localises to the cell membrane. It catalyses the reaction 4-O-[(2R)-glycerylphospho]-N-acetyl-beta-D-mannosaminyl-(1-&gt;4)-N-acetyl-alpha-D-glucosaminyl di-trans,octa-cis-undecaprenyl diphosphate + CDP-L-ribitol = 4-O-[1-D-ribitylphospho-(2R)-1-glycerylphospho]-N-acetyl-beta-D-mannosaminyl-(1-&gt;4)-N-acetyl-alpha-D-glucosaminyl di-trans,octa-cis-undecaprenyl diphosphate + CMP + H(+). It participates in cell wall biogenesis; poly(ribitol phosphate) teichoic acid biosynthesis. In terms of biological role, catalyzes the addition of a single ribitol phosphate unit onto the glycerol phosphate of the linkage unit, as a primer for polymerisation by TarL. The sequence is that of Teichoic acid ribitol-phosphate primase (tarK) from Bacillus spizizenii (strain ATCC 23059 / NRRL B-14472 / W23) (Bacillus subtilis subsp. spizizenii).